Reading from the N-terminus, the 442-residue chain is 4-hydroxyphenylpyruvate dioxygenase (442 aa).

2 consecutive VOC domains span residues R45 to A200 and R216 to K376. Residues H219, H301, and E387 each contribute to the Fe cation site.

This sequence belongs to the 4HPPD family. The cofactor is Fe cation.

It localises to the cytoplasm. It catalyses the reaction 3-(4-hydroxyphenyl)pyruvate + O2 = homogentisate + CO2. The protein operates within amino-acid degradation; L-phenylalanine degradation; acetoacetate and fumarate from L-phenylalanine: step 3/6. Its pathway is cofactor biosynthesis; prenylquinone biosynthesis. This is 4-hydroxyphenylpyruvate dioxygenase from Daucus carota (Wild carrot).